Here is a 291-residue protein sequence, read N- to C-terminus: uncharacterized protein (291 aa).

Residues 1–55 (MRTHDIPRSPLVGHKKNAAPDGIGASRACCPARENEPFKKGSTNSRGGGVEWSRS) are disordered. The next 2 membrane-spanning stretches (helical) occupy residues 74–96 (WWAV…PVHA) and 188–210 (YYYL…RIRL).

It to T.pallidum TP_0733.

The protein resides in the cell membrane. This is an uncharacterized protein from Treponema pallidum (strain Nichols).